The following is a 364-amino-acid chain: Phospho-N-acetylmuramoyl-pentapeptide-transferase (364 aa).

The next 10 membrane-spanning stretches (helical) occupy residues 3–23 (AILF…RVAI), 51–71 (TMGG…AKLI), 80–100 (ALLL…DDFI), 116–136 (MIGL…SWLE), 154–174 (IGWI…IIAA), 185–205 (LDGL…FVNI), 229–249 (PLDL…FLWW), 256–276 (IFMG…LAIL), 281–301 (LLLI…MLQV), and 341–361 (FWII…AEWV).

Belongs to the glycosyltransferase 4 family. MraY subfamily. Requires Mg(2+) as cofactor.

It localises to the cell membrane. The catalysed reaction is UDP-N-acetyl-alpha-D-muramoyl-L-alanyl-gamma-D-glutamyl-meso-2,6-diaminopimeloyl-D-alanyl-D-alanine + di-trans,octa-cis-undecaprenyl phosphate = di-trans,octa-cis-undecaprenyl diphospho-N-acetyl-alpha-D-muramoyl-L-alanyl-D-glutamyl-meso-2,6-diaminopimeloyl-D-alanyl-D-alanine + UMP. Its pathway is cell wall biogenesis; peptidoglycan biosynthesis. Its function is as follows. Catalyzes the initial step of the lipid cycle reactions in the biosynthesis of the cell wall peptidoglycan: transfers peptidoglycan precursor phospho-MurNAc-pentapeptide from UDP-MurNAc-pentapeptide onto the lipid carrier undecaprenyl phosphate, yielding undecaprenyl-pyrophosphoryl-MurNAc-pentapeptide, known as lipid I. The sequence is that of Phospho-N-acetylmuramoyl-pentapeptide-transferase from Nocardioides sp. (strain ATCC BAA-499 / JS614).